Here is a 164-residue protein sequence, read N- to C-terminus: F-box protein At4g05010 (164 aa).

Residues 38–57 (SKRAPENDSPPVKRPSHETT) are disordered. The region spanning 61–109 (RSLLETLHQDILIRVLCHVDHEDLATLKRVSKTIRKAVIEAKKSHFDYS) is the F-box domain.

This chain is F-box protein At4g05010, found in Arabidopsis thaliana (Mouse-ear cress).